The sequence spans 218 residues: Ribose-5-phosphate isomerase A (218 aa).

Residues T28–T31, D81–D84, and K94–G97 contribute to the substrate site. E103 serves as the catalytic Proton acceptor. A substrate-binding site is contributed by K121.

Belongs to the ribose 5-phosphate isomerase family. In terms of assembly, homodimer.

It carries out the reaction aldehydo-D-ribose 5-phosphate = D-ribulose 5-phosphate. It functions in the pathway carbohydrate degradation; pentose phosphate pathway; D-ribose 5-phosphate from D-ribulose 5-phosphate (non-oxidative stage): step 1/1. Catalyzes the reversible conversion of ribose-5-phosphate to ribulose 5-phosphate. The protein is Ribose-5-phosphate isomerase A of Alcanivorax borkumensis (strain ATCC 700651 / DSM 11573 / NCIMB 13689 / SK2).